The primary structure comprises 938 residues: Isoleucine--tRNA ligase (938 aa).

Positions 58-68 (PYANGSIHIGH) match the 'HIGH' region motif. Lys-183 bears the N6-acetyllysine mark. Glu-561 is an L-isoleucyl-5'-AMP binding site. The short motif at 602-606 (KMSKS) is the 'KMSKS' region element. Lys-605 is a binding site for ATP. Residues Cys-901, Cys-904, Cys-921, and Cys-924 each coordinate Zn(2+).

It belongs to the class-I aminoacyl-tRNA synthetase family. IleS type 1 subfamily. In terms of assembly, monomer. Zn(2+) serves as cofactor.

The protein resides in the cytoplasm. The catalysed reaction is tRNA(Ile) + L-isoleucine + ATP = L-isoleucyl-tRNA(Ile) + AMP + diphosphate. Functionally, catalyzes the attachment of isoleucine to tRNA(Ile). As IleRS can inadvertently accommodate and process structurally similar amino acids such as valine, to avoid such errors it has two additional distinct tRNA(Ile)-dependent editing activities. One activity is designated as 'pretransfer' editing and involves the hydrolysis of activated Val-AMP. The other activity is designated 'posttransfer' editing and involves deacylation of mischarged Val-tRNA(Ile). In Shigella flexneri, this protein is Isoleucine--tRNA ligase.